Consider the following 330-residue polypeptide: Delta-aminolevulinic acid dehydratase (330 aa).

4 residues coordinate Zn(2+): cysteine 122, cysteine 124, histidine 131, and cysteine 132. Lysine 199 (schiff-base intermediate with substrate) is an active-site residue. Lysine 199 bears the N6-succinyllysine mark. Residue arginine 209 coordinates 5-aminolevulinate. Residue serine 215 is modified to Phosphoserine. Arginine 221 is a 5-aminolevulinate binding site. Cysteine 223 serves as a coordination point for Zn(2+). Lysine 252 serves as the catalytic Schiff-base intermediate with substrate. Lysine 252 is modified (N6-succinyllysine). The 5-aminolevulinate site is built by serine 279 and tyrosine 318.

This sequence belongs to the ALAD family. In terms of assembly, homooctamer; active form. Homohexamer; low activity form. Zn(2+) is required as a cofactor.

The protein localises to the cytoplasm. Its subcellular location is the cytosol. The catalysed reaction is 2 5-aminolevulinate = porphobilinogen + 2 H2O + H(+). The protein operates within porphyrin-containing compound metabolism; protoporphyrin-IX biosynthesis; coproporphyrinogen-III from 5-aminolevulinate: step 1/4. Its activity is regulated as follows. Can alternate between a fully active homooctamer and a low-activity homohexamer. A bound magnesium ion may promote the assembly of the fully active homooctamer. The magnesium-binding site is absent in the low-activity homohexamer. Inhibited by compounds that favor the hexameric state. Inhibited by divalent lead ions. The lead ions partially displace the zinc cofactor. Functionally, catalyzes an early step in the biosynthesis of tetrapyrroles. Binds two molecules of 5-aminolevulinate per subunit, each at a distinct site, and catalyzes their condensation to form porphobilinogen. The sequence is that of Delta-aminolevulinic acid dehydratase (Alad) from Mus musculus (Mouse).